The primary structure comprises 116 residues: Mercuric transport protein MerT (116 aa).

2 helical membrane passes run Leu-16–Phe-36 and Val-46–Trp-66. Positions 24 and 25 each coordinate Hg(2+). Hg(2+) is bound by residues Cys-76 and Cys-82. Residues Ile-94–Phe-114 traverse the membrane as a helical segment.

This sequence belongs to the MerT family.

The protein localises to the cell inner membrane. Its function is as follows. Involved in mercury resistance. Probably transfers a mercuric ion from the periplasmic Hg(2+)-binding protein MerP to the cytoplasmic mercuric reductase MerA. This chain is Mercuric transport protein MerT, found in Pseudomonas fluorescens.